Here is a 340-residue protein sequence, read N- to C-terminus: DNA-directed RNA polymerase subunit alpha (340 aa).

The segment at 1 to 233 is alpha N-terminal domain (alpha-NTD); that stretch reads MVREEVAVST…DLFIPFLHAE (233 aa). Residues 266 to 340 form an alpha C-terminal domain (alpha-CTD) region; sequence KKEIALKCIF…GIDLPKNKRF (75 aa).

The protein belongs to the RNA polymerase alpha chain family. In terms of assembly, in plastids the minimal PEP RNA polymerase catalytic core is composed of four subunits: alpha, beta, beta', and beta''. When a (nuclear-encoded) sigma factor is associated with the core the holoenzyme is formed, which can initiate transcription.

Its subcellular location is the plastid. The protein resides in the chloroplast. The enzyme catalyses RNA(n) + a ribonucleoside 5'-triphosphate = RNA(n+1) + diphosphate. In terms of biological role, DNA-dependent RNA polymerase catalyzes the transcription of DNA into RNA using the four ribonucleoside triphosphates as substrates. The chain is DNA-directed RNA polymerase subunit alpha from Calycanthus floridus var. glaucus (Eastern sweetshrub).